A 323-amino-acid chain; its full sequence is uncharacterized protein (323 aa).

2 disordered regions span residues 185–214 (AELM…GSSW) and 271–294 (GNII…YEKL).

This sequence belongs to the IGBP1/TAP42 family.

This is an uncharacterized protein from Schizosaccharomyces pombe (strain 972 / ATCC 24843) (Fission yeast).